The primary structure comprises 443 residues: UDP-N-acetylglucosamine 1-carboxyvinyltransferase 1 (443 aa).

22–23 provides a ligand contact to phosphoenolpyruvate; sequence KN. R95 contributes to the UDP-N-acetyl-alpha-D-glucosamine binding site. The Proton donor role is filled by C119. Position 119 is a 2-(S-cysteinyl)pyruvic acid O-phosphothioketal (C119). UDP-N-acetyl-alpha-D-glucosamine-binding positions include 124-128, D308, and V330; that span reads RPIDL.

It belongs to the EPSP synthase family. MurA subfamily.

It localises to the cytoplasm. It carries out the reaction phosphoenolpyruvate + UDP-N-acetyl-alpha-D-glucosamine = UDP-N-acetyl-3-O-(1-carboxyvinyl)-alpha-D-glucosamine + phosphate. Its pathway is cell wall biogenesis; peptidoglycan biosynthesis. Its function is as follows. Cell wall formation. Adds enolpyruvyl to UDP-N-acetylglucosamine. The protein is UDP-N-acetylglucosamine 1-carboxyvinyltransferase 1 of Oceanobacillus iheyensis (strain DSM 14371 / CIP 107618 / JCM 11309 / KCTC 3954 / HTE831).